The primary structure comprises 329 residues: DNA-directed RNA polymerase subunit alpha (329 aa).

Positions 1-234 are alpha N-terminal domain (alpha-NTD); it reads MQGSVTEFLK…EQLDAFVELR (234 aa). Positions 248–329 are alpha C-terminal domain (alpha-CTD); that stretch reads FDPILLRPVD…WPPASLADDL (82 aa).

It belongs to the RNA polymerase alpha chain family. Homodimer. The RNAP catalytic core consists of 2 alpha, 1 beta, 1 beta' and 1 omega subunit. When a sigma factor is associated with the core the holoenzyme is formed, which can initiate transcription.

It catalyses the reaction RNA(n) + a ribonucleoside 5'-triphosphate = RNA(n+1) + diphosphate. Its function is as follows. DNA-dependent RNA polymerase catalyzes the transcription of DNA into RNA using the four ribonucleoside triphosphates as substrates. In Shewanella amazonensis (strain ATCC BAA-1098 / SB2B), this protein is DNA-directed RNA polymerase subunit alpha.